Reading from the N-terminus, the 471-residue chain is Glutamate--tRNA ligase (471 aa).

The 'HIGH' region motif lies at 9 to 19 (PSPTGYLHVGG). Zn(2+) is bound by residues Cys-98, Cys-100, Cys-125, and His-127. A 'KMSKS' region motif is present at residues 237-241 (KLSKR). Lys-240 provides a ligand contact to ATP.

The protein belongs to the class-I aminoacyl-tRNA synthetase family. Glutamate--tRNA ligase type 1 subfamily. Monomer. Zn(2+) is required as a cofactor.

It is found in the cytoplasm. The enzyme catalyses tRNA(Glu) + L-glutamate + ATP = L-glutamyl-tRNA(Glu) + AMP + diphosphate. In terms of biological role, catalyzes the attachment of glutamate to tRNA(Glu) in a two-step reaction: glutamate is first activated by ATP to form Glu-AMP and then transferred to the acceptor end of tRNA(Glu). This Shigella sonnei (strain Ss046) protein is Glutamate--tRNA ligase.